The following is a 72-amino-acid chain: Translation initiation factor IF-1 (72 aa).

One can recognise an S1-like domain in the interval 1–72 (MAKEGAIEVE…TRGRIVYRYK (72 aa)).

Belongs to the IF-1 family. In terms of assembly, component of the 30S ribosomal translation pre-initiation complex which assembles on the 30S ribosome in the order IF-2 and IF-3, IF-1 and N-formylmethionyl-tRNA(fMet); mRNA recruitment can occur at any time during PIC assembly.

The protein resides in the cytoplasm. In terms of biological role, one of the essential components for the initiation of protein synthesis. Stabilizes the binding of IF-2 and IF-3 on the 30S subunit to which N-formylmethionyl-tRNA(fMet) subsequently binds. Helps modulate mRNA selection, yielding the 30S pre-initiation complex (PIC). Upon addition of the 50S ribosomal subunit IF-1, IF-2 and IF-3 are released leaving the mature 70S translation initiation complex. The polypeptide is Translation initiation factor IF-1 (Corynebacterium glutamicum (strain R)).